Consider the following 351-residue polypeptide: Protein FAM118B (351 aa).

A2 carries the post-translational modification N-acetylalanine. At S9 the chain carries Phosphoserine.

Belongs to the FAM118 family.

Its subcellular location is the nucleus. The protein localises to the cajal body. May play a role in Cajal bodies formation. The chain is Protein FAM118B (FAM118B) from Homo sapiens (Human).